The primary structure comprises 277 residues: Putative pyruvate, phosphate dikinase regulatory protein (277 aa).

156–163 (GVSRTSKT) lines the ADP pocket.

It belongs to the pyruvate, phosphate/water dikinase regulatory protein family. PDRP subfamily.

It catalyses the reaction N(tele)-phospho-L-histidyl/L-threonyl-[pyruvate, phosphate dikinase] + ADP = N(tele)-phospho-L-histidyl/O-phospho-L-threonyl-[pyruvate, phosphate dikinase] + AMP + H(+). The enzyme catalyses N(tele)-phospho-L-histidyl/O-phospho-L-threonyl-[pyruvate, phosphate dikinase] + phosphate + H(+) = N(tele)-phospho-L-histidyl/L-threonyl-[pyruvate, phosphate dikinase] + diphosphate. Functionally, bifunctional serine/threonine kinase and phosphorylase involved in the regulation of the pyruvate, phosphate dikinase (PPDK) by catalyzing its phosphorylation/dephosphorylation. This Carboxydothermus hydrogenoformans (strain ATCC BAA-161 / DSM 6008 / Z-2901) protein is Putative pyruvate, phosphate dikinase regulatory protein.